The following is a 329-amino-acid chain: Glycerol-3-phosphate dehydrogenase [NAD(P)+] (329 aa).

Positions 11 and 101 each coordinate NADPH. Sn-glycerol 3-phosphate contacts are provided by Lys101, Gly132, and Ser134. Ala136 lines the NADPH pocket. Lys188, Asp241, Ser251, Arg252, and Asn253 together coordinate sn-glycerol 3-phosphate. Catalysis depends on Lys188, which acts as the Proton acceptor. Arg252 lines the NADPH pocket. NADPH-binding residues include Val276 and Glu278.

The protein belongs to the NAD-dependent glycerol-3-phosphate dehydrogenase family.

It localises to the cytoplasm. The enzyme catalyses sn-glycerol 3-phosphate + NAD(+) = dihydroxyacetone phosphate + NADH + H(+). The catalysed reaction is sn-glycerol 3-phosphate + NADP(+) = dihydroxyacetone phosphate + NADPH + H(+). It participates in membrane lipid metabolism; glycerophospholipid metabolism. Functionally, catalyzes the reduction of the glycolytic intermediate dihydroxyacetone phosphate (DHAP) to sn-glycerol 3-phosphate (G3P), the key precursor for phospholipid synthesis. This is Glycerol-3-phosphate dehydrogenase [NAD(P)+] from Phytoplasma australiense.